The chain runs to 737 residues: uncharacterized protein (737 aa).

The next 7 membrane-spanning stretches (helical) occupy residues 11 to 31 (LSLLLFYFLAFLLLWEWLRPL), 36 to 56 (ETKHTGFFSVFIGLTFLLTFF), 60 to 80 (WFVTVPFCVIFTLISIHILFY), 118 to 138 (TLLFFVLLWLLVYLLHYWVIY), 142 to 162 (ILFFFLMTVAYITILDTFTPY), 164 to 184 (ATFAVIRIVLIGFFMLGLLYL), and 200 to 220 (VLKWFLPLSVLVLAATGFGLA). Residues 556-611 (PAQFTSSDTKDSGSDSSSSPKKAKEKQKEEKKQPQKEEKQKEKREPAVSKKPSASH) are disordered. A compositionally biased stretch (basic and acidic residues) spans 581–603 (KQKEEKKQPQKEEKQKEKREPAV). A helical membrane pass occupies residues 618 to 638 (LYAALAVLAVLLVAAVLLYVF).

It is found in the cell membrane. This is an uncharacterized protein from Bacillus subtilis (strain 168).